The chain runs to 292 residues: ATP synthase gamma chain (292 aa).

The protein belongs to the ATPase gamma chain family. F-type ATPases have 2 components, CF(1) - the catalytic core - and CF(0) - the membrane proton channel. CF(1) has five subunits: alpha(3), beta(3), gamma(1), delta(1), epsilon(1). CF(0) has three main subunits: a, b and c.

It localises to the cell membrane. In terms of biological role, produces ATP from ADP in the presence of a proton gradient across the membrane. The gamma chain is believed to be important in regulating ATPase activity and the flow of protons through the CF(0) complex. The sequence is that of ATP synthase gamma chain from Streptococcus thermophilus (strain CNRZ 1066).